A 118-amino-acid polypeptide reads, in one-letter code: Large ribosomal subunit protein bL20 (118 aa).

This sequence belongs to the bacterial ribosomal protein bL20 family.

Its function is as follows. Binds directly to 23S ribosomal RNA and is necessary for the in vitro assembly process of the 50S ribosomal subunit. It is not involved in the protein synthesizing functions of that subunit. The chain is Large ribosomal subunit protein bL20 from Francisella philomiragia subsp. philomiragia (strain ATCC 25017 / CCUG 19701 / FSC 153 / O#319-036).